The chain runs to 123 residues: UPF0102 protein Fjoh_1217 (123 aa).

The protein belongs to the UPF0102 family.

This Flavobacterium johnsoniae (strain ATCC 17061 / DSM 2064 / JCM 8514 / BCRC 14874 / CCUG 350202 / NBRC 14942 / NCIMB 11054 / UW101) (Cytophaga johnsonae) protein is UPF0102 protein Fjoh_1217.